The sequence spans 514 residues: Voltage-gated potassium channel regulatory subunit KCNG1 (514 aa).

Residues 1–224 lie on the Cytoplasmic side of the membrane; that stretch reads MTLLPGDNSD…DMVEKPHSGL (224 aa). A compositionally biased stretch (acidic residues) spans 181 to 196; it reads EREDEEEALDSEDQES. The segment at 181–205 is disordered; that stretch reads EREDEEEALDSEDQESEGPSTSEGR. Residues 225 to 246 form a helical membrane-spanning segment; that stretch reads PGKVFACLSVLFVTVTAVNLSV. Residues 247–267 are Extracellular-facing; sequence STLPSLREEEEQGQCSQMCHN. A helical membrane pass occupies residues 268 to 289; that stretch reads VFIVESVCVGWFSLEFLLRFIQ. Residues 290–300 lie on the Cytoplasmic side of the membrane; sequence APSKFAFLRSP. Residues 301-321 traverse the membrane as a helical segment; it reads LTLIDLVAILPYYVTLLVDGA. Residues 322 to 338 are Extracellular-facing; sequence ASSRRKPSTGNSYLDKV. A helical; Voltage-sensor transmembrane segment spans residues 339–359; sequence GLVLRVLRALRILYVMRLARH. At 360-374 the chain is on the cytoplasmic side; the sequence is SLGLQTLGLTARRCT. Residues 375-396 form a helical membrane-spanning segment; the sequence is REFGLLLLFLCVAIALFAPLLY. Over 397–411 the chain is Extracellular; sequence VIENEMADSPEFTSI. The segment at residues 412–423 is an intramembrane region (helical); sequence PACYWWAVITMT. The short motif at 424–429 is the Selectivity filter element; that stretch reads TVGYGD. The stretch at 424–431 is an intramembrane region; sequence TVGYGDMV. Over 432-438 the chain is Extracellular; it reads PRSTPGQ. A helical membrane pass occupies residues 439 to 467; sequence VVALSSILSGILLMAFPVTSIFHTFSRSY. Topologically, residues 468–514 are cytoplasmic; that stretch reads LELKQEQERVLIRRAQYLIKTKSQLSGMSQDSDILFGSASSDTRDNN.

This sequence belongs to the potassium channel family. G (TC 1.A.1.2) subfamily. Kv6.1/KCNG1 sub-subfamily. Heterotetramer with KCNB1 or KCNB2.

It is found in the cell membrane. In terms of biological role, regulatory alpha-subunit of the voltage-gated potassium (Kv) channel which, when coassembled with KCNB1 or KCNB2, can modulate their expression and their gating kinetics by acting on deactivation upon repolarization and inactivation during maintained depolarization. Potassium channel subunit that does not form functional channels by itself. In Rattus norvegicus (Rat), this protein is Voltage-gated potassium channel regulatory subunit KCNG1.